A 96-amino-acid polypeptide reads, in one-letter code: Co-chaperonin GroES (96 aa).

This sequence belongs to the GroES chaperonin family. Heptamer of 7 subunits arranged in a ring. Interacts with the chaperonin GroEL.

It localises to the cytoplasm. In terms of biological role, together with the chaperonin GroEL, plays an essential role in assisting protein folding. The GroEL-GroES system forms a nano-cage that allows encapsulation of the non-native substrate proteins and provides a physical environment optimized to promote and accelerate protein folding. GroES binds to the apical surface of the GroEL ring, thereby capping the opening of the GroEL channel. The polypeptide is Co-chaperonin GroES (Haemophilus influenzae (strain 86-028NP)).